The primary structure comprises 371 residues: Phospholipid-transporting ATPase accessory subunit ivn1 (371 aa).

Residues 1–39 are Cytoplasmic-facing; that stretch reads MSQTEIVKKPKHKRFKRPDKSRFVQQTLPAWQFIFTPWT. Residues 40-60 form a helical membrane-spanning segment; that stretch reads VLPLLFLLGIVFAPLGAGMFV. The Extracellular portion of the chain corresponds to 61 to 325; sequence ASRRVKELRI…STTSVIGGKN (265 aa). 2 cysteine pairs are disulfide-bonded: Cys75–Cys111 and Cys166–Cys181. Asn99 carries an N-linked (GlcNAc...) asparagine glycan. N-linked (GlcNAc...) asparagine glycosylation is found at Asn190, Asn212, Asn216, Asn233, Asn284, and Asn297. The chain crosses the membrane as a helical span at residues 326–346; that stretch reads YFLGILYFVIGGLCAASGVIL. Over 347-371 the chain is Cytoplasmic; the sequence is SIACLIKPRRVGDPRYLSWNRGKSS.

Belongs to the CDC50/LEM3 family.

Its subcellular location is the endoplasmic reticulum membrane. In terms of biological role, accessory component of a P4-ATPase flippase complex which catalyzes the hydrolysis of ATP coupled to the transport of aminophospholipids from the lumenal to the cytosolic leaflet of membranes and ensures the maintenance of asymmetric distribution of phospholipids. The chain is Phospholipid-transporting ATPase accessory subunit ivn1 (ivn1) from Schizosaccharomyces pombe (strain 972 / ATCC 24843) (Fission yeast).